The sequence spans 284 residues: Tropomyosin (284 aa).

Residues methionine 1–glutamate 54 form a disordered region. Residues methionine 1–glutamate 273 adopt a coiled-coil conformation. The span at lysine 12–alanine 45 shows a compositional bias: basic and acidic residues.

It belongs to the tropomyosin family. Homodimer. As to expression, muscle (at protein level). Expressed in leg and chest protection muscle (at protein level). Expressed in claw muscle.

Tropomyosin, in association with the troponin complex, plays a central role in the calcium dependent regulation of muscle contraction. The polypeptide is Tropomyosin (Eriocheir sinensis (Chinese mitten crab)).